The sequence spans 57 residues: MAVPFRRTSKTRKRLRRTHFKLQVPGMVQCPNCGEWKLAHRVCKACGTYKGRDVVNK.

It belongs to the bacterial ribosomal protein bL32 family.

This is Large ribosomal subunit protein bL32 from Geobacillus kaustophilus (strain HTA426).